Consider the following 312-residue polypeptide: Isethionate sulfite-lyase activating enzyme (312 aa).

The Radical SAM core domain occupies histidine 20–leucine 304. Cysteine 34, cysteine 38, cysteine 41, cysteine 60, cysteine 66, cysteine 69, cysteine 73, cysteine 93, cysteine 96, cysteine 100, and cysteine 104 together coordinate [4Fe-4S] cluster. S-adenosyl-L-methionine is bound at residue tryptophan 40–serine 42. 2 consecutive 4Fe-4S ferredoxin-type domains span residues alanine 51 to aspartate 83 and aspartate 84 to lysine 115. S-adenosyl-L-methionine contacts are provided by residues glycine 144, aspartate 193–lysine 195, and histidine 267.

This sequence belongs to the organic radical-activating enzymes family. As to quaternary structure, monomer. [4Fe-4S] cluster is required as a cofactor.

It catalyses the reaction glycyl-[protein] + reduced [flavodoxin] + S-adenosyl-L-methionine = glycin-2-yl radical-[protein] + semiquinone [flavodoxin] + 5'-deoxyadenosine + L-methionine + H(+). Its pathway is organosulfur degradation; alkanesulfonate degradation. Functionally, involved in an anaerobic respiration pathway that converts the sulfonate isethionate (2-hydroxyethanesulfonate) to ammonia, acetate and sulfide. Catalyzes activation of the isethionate sulfite-lyase IslA under anaerobic conditions by generation of an organic free radical on a glycine residue, via a homolytic cleavage of S-adenosyl-L-methionine (SAM). The sequence is that of Isethionate sulfite-lyase activating enzyme from Desulfovibrio desulfuricans (strain ATCC 27774 / DSM 6949 / MB).